The primary structure comprises 180 residues: Small ribosomal subunit protein uS5 (180 aa).

Residues 1 to 20 (MAKMQGRMQGKVAPGDDRGD) are disordered. The region spanning 22–85 (LKEKMVAINR…DEARRKMIKV (64 aa)) is the S5 DRBM domain.

It belongs to the universal ribosomal protein uS5 family. Part of the 30S ribosomal subunit. Contacts proteins S4 and S8.

In terms of biological role, with S4 and S12 plays an important role in translational accuracy. Located at the back of the 30S subunit body where it stabilizes the conformation of the head with respect to the body. The chain is Small ribosomal subunit protein uS5 from Nitrosospira multiformis (strain ATCC 25196 / NCIMB 11849 / C 71).